A 499-amino-acid polypeptide reads, in one-letter code: Rhamnogalacturonan I rhamnosyltransferase 1 (499 aa).

The chain crosses the membrane as a helical; Signal-anchor for type II membrane protein span at residues 31–50; that stretch reads WFVRVCSSILVWTCLVQLFA. N-linked (GlcNAc...) asparagine glycans are attached at residues N88, N121, and N207. 261–263 provides a ligand contact to substrate; the sequence is HLR. N-linked (GlcNAc...) asparagine glycans are attached at residues N375, N435, and N496.

Belongs to the glycosyltransferase GT106 family.

The protein localises to the golgi apparatus membrane. The catalysed reaction is alpha-D-galacturonosyl-[(1-&gt;2)-alpha-L-rhamnosyl-(1-&gt;4)-alpha-D-galacturonosyl](n) + UDP-beta-L-rhamnose = [(1-&gt;2)-alpha-L-rhamnosyl-(1-&gt;4)-alpha-D-galacturonosyl](n+1) + UDP + H(+). It functions in the pathway glycan metabolism; pectin biosynthesis. In terms of biological role, glycosyltransferase involved in the formation of rhamnogalacturonan I (RG-I) oligosaccharides in the seed coat mucilage, which is a specialized cell wall with abundant RG-I. Transfers the rhamnose residue from UDP-beta-L-rhamnose to RG-I oligosaccharides. This Arabidopsis thaliana (Mouse-ear cress) protein is Rhamnogalacturonan I rhamnosyltransferase 1.